The primary structure comprises 122 residues: Large ribosomal subunit protein uL14 (122 aa).

Belongs to the universal ribosomal protein uL14 family. As to quaternary structure, part of the 50S ribosomal subunit. Forms a cluster with proteins L3 and L19. In the 70S ribosome, L14 and L19 interact and together make contacts with the 16S rRNA in bridges B5 and B8.

Its function is as follows. Binds to 23S rRNA. Forms part of two intersubunit bridges in the 70S ribosome. This is Large ribosomal subunit protein uL14 from Burkholderia multivorans (strain ATCC 17616 / 249).